Here is a 309-residue protein sequence, read N- to C-terminus: Taste receptor type 2 member 31 (309 aa).

The Extracellular segment spans residues 1-2; it reads MT. A helical transmembrane segment spans residues 3 to 23; that stretch reads TFIPIIFSSVVVVLFVIGNFA. The Cytoplasmic portion of the chain corresponds to 24–55; it reads NGFIALVNSIERVKRQKISFADQILTALAVSR. A helical membrane pass occupies residues 56 to 76; that stretch reads VGLLWVLLLNWYSTVFNPAFY. Residues 77–100 lie on the Extracellular side of the membrane; sequence SVEVRTTAYNVWAVTGHFSNWLAT. A helical membrane pass occupies residues 101 to 121; sequence SLSIFYLLKIANFSNLIFLHL. Residues 122–126 lie on the Cytoplasmic side of the membrane; sequence KRRVK. A helical membrane pass occupies residues 127-147; it reads SVILVMLLGPLLFLACQLFVI. The Extracellular segment spans residues 148–181; sequence NMKEIVRTKEYEGNLTWKIKLRSAVYLSDATVTT. A glycan (N-linked (GlcNAc...) asparagine) is linked at asparagine 161. The chain crosses the membrane as a helical span at residues 182–202; that stretch reads LGNLVPFTLTLLCFLLLICSL. The Cytoplasmic portion of the chain corresponds to 203–229; that stretch reads CKHLKKMQLHGKGSQDPSTKVHIKALQ. Residues 230–250 form a helical membrane-spanning segment; it reads TVIFFLLLCAVYFLSIMISVW. The Extracellular portion of the chain corresponds to 251-259; it reads SFGSLENKP. Residues 260 to 280 form a helical membrane-spanning segment; the sequence is VFMFCKAIRFSYPSIHPFILI. At 281-309 the chain is on the cytoplasmic side; it reads WGNKKLKQTFLSVLRQVRYWVKGEKPSSP.

This sequence belongs to the G-protein coupled receptor T2R family. Expressed in subsets of taste receptor cells of the tongue and exclusively in gustducin-positive cells.

The protein localises to the membrane. Functionally, receptor that may play a role in the perception of bitterness and is gustducin-linked. May play a role in sensing the chemical composition of the gastrointestinal content. The activity of this receptor may stimulate alpha gustducin, mediate PLC-beta-2 activation and lead to the gating of TRPM5. Activated by the sulfonyl amide sweeteners saccharin and acesulfame K. The sequence is that of Taste receptor type 2 member 31 (TAS2R31) from Homo sapiens (Human).